A 280-amino-acid chain; its full sequence is Chemotaxis protein methyltransferase 2 (280 aa).

The CheR-type methyltransferase domain maps to 10-280; sequence FGNQEFHYTR…SVGQTVYSPA (271 aa). Residues asparagine 85, threonine 87, arginine 91, glutamate 125, aspartate 150, 208–209, and 226–227 contribute to the S-adenosyl-L-methionine site; these read NL and RN.

As to quaternary structure, interacts with the C-terminal pentapeptide GWEEF of the methyl-accepting chemotaxis protein McpB.

The enzyme catalyses L-glutamyl-[protein] + S-adenosyl-L-methionine = [protein]-L-glutamate 5-O-methyl ester + S-adenosyl-L-homocysteine. Functionally, methylation of the methyl-accepting chemotaxis proteins (MCP) to form gamma-glutamyl methyl ester residues in MCP. It specifically targets the McpB chemoreceptor. In Pseudomonas aeruginosa (strain ATCC 15692 / DSM 22644 / CIP 104116 / JCM 14847 / LMG 12228 / 1C / PRS 101 / PAO1), this protein is Chemotaxis protein methyltransferase 2.